The following is a 449-amino-acid chain: Probable glycosyltransferase 5 (449 aa).

The segment covering 1 to 14 has biased composition (basic and acidic residues); it reads MMEKHGGKVTSDRR. A disordered region spans residues 1–24; that stretch reads MMEKHGGKVTSDRRAGRRQHGQRC. The Cytoplasmic segment spans residues 1–28; it reads MMEKHGGKVTSDRRAGRRQHGQRCSASD. The chain crosses the membrane as a helical; Signal-anchor for type II membrane protein span at residues 29–49; it reads AAPLVVVVILIVAALFLILGP. Over 50–449 the chain is Lumenal; the sequence is TGSSSFTVPR…HPTFRAARPT (400 aa). Residues 74–109 form a disordered region; the sequence is APPPPPPPAQMQAGANASSEEDSGLPPPRQLTDPPY. 3 N-linked (GlcNAc...) asparagine glycosylation sites follow: asparagine 89, asparagine 413, and asparagine 422.

The protein belongs to the glycosyltransferase 34 family.

The protein resides in the golgi apparatus membrane. Probable glycosyltransferase that may be involved in the biosynthesis of xyloglucan. The polypeptide is Probable glycosyltransferase 5 (Oryza sativa subsp. japonica (Rice)).